An 806-amino-acid chain; its full sequence is Mitochondrial intermediate peptidase (806 aa).

A mitochondrion-targeting transit peptide spans 1–29 (MLSRHLTVLRSACRVSHDLRVPSTQAVRK). Zn(2+) is bound at residue His-581. Residue Glu-582 is part of the active site. The Zn(2+) site is built by His-585 and His-588.

The protein belongs to the peptidase M3 family. Zn(2+) is required as a cofactor.

The protein localises to the mitochondrion matrix. It catalyses the reaction Release of an N-terminal octapeptide as second stage of processing of some proteins imported into the mitochondrion.. Functionally, cleaves proteins, imported into the mitochondrion, to their mature size. While most mitochondrial precursor proteins are processed to the mature form in one step by mitochondrial processing peptidase (MPP), the sequential cleavage by MIP of an octapeptide after initial processing by MPP is a required step for a subgroup of nuclear-encoded precursor proteins destined for the matrix or the inner membrane. The polypeptide is Mitochondrial intermediate peptidase (OCT1) (Malassezia globosa (strain ATCC MYA-4612 / CBS 7966) (Dandruff-associated fungus)).